We begin with the raw amino-acid sequence, 449 residues long: Trigger factor (449 aa).

The region spanning 174–261 is the PPIase FKBP-type domain; the sequence is GDIAVVGFKG…LKDLKTRELP (88 aa). The segment at 430 to 449 is disordered; that stretch reads ENSTVTEKAPDKDKPSVTDA. Basic and acidic residues predominate over residues 437–449; it reads KAPDKDKPSVTDA.

The protein belongs to the FKBP-type PPIase family. Tig subfamily.

It localises to the cytoplasm. The enzyme catalyses [protein]-peptidylproline (omega=180) = [protein]-peptidylproline (omega=0). Involved in protein export. Acts as a chaperone by maintaining the newly synthesized protein in an open conformation. Functions as a peptidyl-prolyl cis-trans isomerase. The sequence is that of Trigger factor from Synechococcus sp. (strain CC9311).